Here is a 1069-residue protein sequence, read N- to C-terminus: Epstein-Barr nuclear antigen 6 (1069 aa).

Disordered regions lie at residues 1–75 (MESF…RIRR), 353–708 (MLAT…PCQS), 733–776 (SSMS…LYPG), 884–932 (REPR…PPRL), and 1008–1069 (PLDI…SELD). The segment covering 50 to 67 (PDSRDQQSRGQRRGDENR) has biased composition (basic and acidic residues). 2 stretches are compositionally biased toward acidic residues: residues 381-391 (VELESSDDELP) and 507-524 (YDDDIIEVIDVETTEEET). Positions 543-561 (STGSAMSSSHTDPSVTQPS) are enriched in polar residues. A compositionally biased stretch (low complexity) spans 689–708 (QQEPSSQQQPATQSTPPCQS). Over residues 742–751 (SHEEQPRYED) the composition is skewed to basic and acidic residues. Over residues 1032–1048 (SQATSEAQEILSDNSEI) the composition is skewed to polar residues.

The protein belongs to the herpesviridae EBNA-6 family. As to quaternary structure, interacts with host CTPB1; this interaction leads to gene repression, but also seems to interfere with the repressive function of CtBP pre-bound to DNA, leading to EBNA6 mediated up-regulation of many host genes. Interacts with host MYC; this interaction enhances MYC stability. Interacts (via N-terminus) with host RBPJ. Interacts (via N-terminus) with host histone H2AX; this interaction facilitates H2AX proteasomal degradation. Interacts with host TP73; this interaction inhibits TP73-mediated apoptotic pathway. Interacts (via N-terminus) with host PIM1; this interaction upregulates and stabilizes PIM1 and induces cell proliferation by inhibiting the growth suppressive properties of p21.

It localises to the host nucleus. The protein localises to the host nucleus matrix. Functionally, plays an essential role for the activation and immortalization of human B-cells. Represses transcription of viral promoters TP1 and Cp through interaction with host RBPJ, and inhibits EBNA2-mediated activation of these promoters. Targets host chromatin through interactions with host transcription factors, especially RBPJ and IRF4. Alternatively, EBNA6 also regulates the transcription of the EBV oncogene LMP1 in a cell cycle-dependent manner. Modulates the activity of several host proteins involved in cell cycle regulation including host cyclin A, MYC, RB, p21 and p27 mainly through binding to the host SCF(SKP2) complex. Inhibits the promoter of host H2AX and targets H2AX to proteasomal degradation in order to promote latency and cell proliferation. Upregulates host PIM1 expression and stabilization. Potentiates PIM1 to promote cell proliferation by inhibiting the growth suppressive properties of p21. This Epstein-Barr virus (strain AG876) (HHV-4) protein is Epstein-Barr nuclear antigen 6 (EBNA6).